We begin with the raw amino-acid sequence, 356 residues long: Cobalt-precorrin-5B C(1)-methyltransferase (356 aa).

The protein belongs to the CbiD family.

It carries out the reaction Co-precorrin-5B + S-adenosyl-L-methionine = Co-precorrin-6A + S-adenosyl-L-homocysteine. It functions in the pathway cofactor biosynthesis; adenosylcobalamin biosynthesis; cob(II)yrinate a,c-diamide from sirohydrochlorin (anaerobic route): step 6/10. Its function is as follows. Catalyzes the methylation of C-1 in cobalt-precorrin-5B to form cobalt-precorrin-6A. This is Cobalt-precorrin-5B C(1)-methyltransferase from Citrifermentans bemidjiense (strain ATCC BAA-1014 / DSM 16622 / JCM 12645 / Bem) (Geobacter bemidjiensis).